Here is a 459-residue protein sequence, read N- to C-terminus: UDP-N-acetylmuramate--L-alanine ligase (459 aa).

118–124 (GTHGKTT) is an ATP binding site.

It belongs to the MurCDEF family.

The protein resides in the cytoplasm. The catalysed reaction is UDP-N-acetyl-alpha-D-muramate + L-alanine + ATP = UDP-N-acetyl-alpha-D-muramoyl-L-alanine + ADP + phosphate + H(+). It participates in cell wall biogenesis; peptidoglycan biosynthesis. In terms of biological role, cell wall formation. This is UDP-N-acetylmuramate--L-alanine ligase from Clostridium beijerinckii (strain ATCC 51743 / NCIMB 8052) (Clostridium acetobutylicum).